The sequence spans 45 residues: Putative metallothionein-like protein 1B (45 aa).

It belongs to the metallothionein superfamily. Type 15 family.

Its function is as follows. Metallothioneins have a high content of cysteine residues that bind various heavy metals. Confers tolerance to cadmium (Cd) and plays a role in Cd and zinc (Zn) homeostasis. In Arabidopsis thaliana (Mouse-ear cress), this protein is Putative metallothionein-like protein 1B (MT1B).